Reading from the N-terminus, the 305-residue chain is Cysteine synthase (305 aa).

Lys45 is modified (N6-(pyridoxal phosphate)lysine). Pyridoxal 5'-phosphate is bound by residues Asn75, 179–183 (GSGGT), and Ser266.

The protein belongs to the cysteine synthase/cystathionine beta-synthase family. As to quaternary structure, homodimer. The cofactor is pyridoxal 5'-phosphate.

It catalyses the reaction O-acetyl-L-serine + hydrogen sulfide = L-cysteine + acetate. Its pathway is amino-acid biosynthesis; L-cysteine biosynthesis; L-cysteine from L-serine: step 2/2. The sequence is that of Cysteine synthase (cysM) from Helicobacter pylori (strain J99 / ATCC 700824) (Campylobacter pylori J99).